The primary structure comprises 607 residues: Large ribosomal subunit assembly factor BipA (607 aa).

The tr-type G domain occupies 3 to 198; that stretch reads ENLRNIAIIA…AIVDHVPAPD (196 aa). Residues 15-20 and 128-131 each bind GTP; these read DHGKTT and NKVD. The C-terminal domain (CTD), required but not sufficient to bind 70S or 30S ribosomes stretch occupies residues 481-607; it reads GQRQNGVLIS…RRANRGQKEE (127 aa).

Belongs to the TRAFAC class translation factor GTPase superfamily. Classic translation factor GTPase family. BipA subfamily. Monomer.

Its subcellular location is the cytoplasm. The enzyme catalyses GTP + H2O = GDP + phosphate + H(+). With respect to regulation, ribosome-associated GTPase is not affected by low levels of ppGpp, &gt;40 uM ppGpp and &gt;50 uM GDP inhibit GTPase. The C-terminus (residues 387-607 or 481-607) inhibits GTPase activity, in its absence kcat increases, but GTPase is no longer stimulated by 70S ribosome or 30S or 50S subunits. A 50S ribosomal subunit assembly protein with GTPase activity, required for 50S subunit assembly at low temperatures, may also play a role in translation. Binds GTP and analogs. Binds the 70S ribosome between the 30S and 50S subunits, in a similar position as ribosome-bound EF-G; it contacts a number of ribosomal proteins, both rRNAs and the A-site tRNA. A ribosome-stimulated GTPase, GTPase activity increases 4 fold in the presence of 70S ribosomes. Binds 70S ribosomes in the presence of GTP or its non-hydrolyzable analog GMPPNP; in the presence of ppGpp or under stress conditions it binds to 30S ribosomal subunits. This Salmonella typhimurium (strain LT2 / SGSC1412 / ATCC 700720) protein is Large ribosomal subunit assembly factor BipA.